A 467-amino-acid chain; its full sequence is MACRTRFAPSPTGYLHIGGARTALYCWLEARRRGGQFVLRIEDTDRQRSTQAAIDAILEAMQWLGLGYDEGPIYQTQRVARYQEVAEQLLAQGKAYYAYETREELDAMREAAMAKQEKPRYDGAAREQNLPYRDDPNRVIRFKNPIGGTVVFDDLIKGRIEIANSELDDMVIFRPDGLPTYNFAVVVDDWDMGITEVIRGDDHINNTPRQINIYAALGAPVPKFAHMPMILDEQGTKLSKRTGAADVMQYKDAGYLPHALINYLARLGWSHGDQELFTPQELLDLFDVKDVNSKAARLDMAKLGWVNQHYLKTDDPASIAPQLEYQLAKLGVDLAAGPAAADVVVALRERVHTLKEMAEKAVVWYQPLETYDAAAVMKHLKLGAEVPLGKARELLAAVDQWSVDSVSAALHDAAAALELGMGKVAQPLRVAITGTQVSPDISQTVYLAGREGALKRIDAALTKIGAA.

The 'HIGH' region motif lies at 9-19; that stretch reads PSPTGYLHIGG. The short motif at 237–241 is the 'KMSKS' region element; sequence KLSKR. Residue lysine 240 coordinates ATP.

It belongs to the class-I aminoacyl-tRNA synthetase family. Glutamate--tRNA ligase type 1 subfamily. Monomer.

The protein resides in the cytoplasm. It catalyses the reaction tRNA(Glu) + L-glutamate + ATP = L-glutamyl-tRNA(Glu) + AMP + diphosphate. In terms of biological role, catalyzes the attachment of glutamate to tRNA(Glu) in a two-step reaction: glutamate is first activated by ATP to form Glu-AMP and then transferred to the acceptor end of tRNA(Glu). In Xanthomonas oryzae pv. oryzae (strain MAFF 311018), this protein is Glutamate--tRNA ligase.